The primary structure comprises 157 residues: Transcriptional repressor NrdR (157 aa).

Residues 1–21 (MKCPNCHKNGSRVVDSRPADN) form a disordered region. A zinc finger lies at 3–34 (CPNCHKNGSRVVDSRPADNGHAIRRRRECEQC). Positions 49 to 139 (LLVIKKNGTR…VYREFKDMHA (91 aa)) constitute an ATP-cone domain.

It belongs to the NrdR family. Zn(2+) is required as a cofactor.

Its function is as follows. Negatively regulates transcription of bacterial ribonucleotide reductase nrd genes and operons by binding to NrdR-boxes. This chain is Transcriptional repressor NrdR, found in Ligilactobacillus salivarius (strain UCC118) (Lactobacillus salivarius).